Reading from the N-terminus, the 315-residue chain is Methionyl-tRNA formyltransferase (315 aa).

113-116 (SLLP) is a binding site for (6S)-5,6,7,8-tetrahydrofolate.

This sequence belongs to the Fmt family.

The catalysed reaction is L-methionyl-tRNA(fMet) + (6R)-10-formyltetrahydrofolate = N-formyl-L-methionyl-tRNA(fMet) + (6S)-5,6,7,8-tetrahydrofolate + H(+). Attaches a formyl group to the free amino group of methionyl-tRNA(fMet). The formyl group appears to play a dual role in the initiator identity of N-formylmethionyl-tRNA by promoting its recognition by IF2 and preventing the misappropriation of this tRNA by the elongation apparatus. The protein is Methionyl-tRNA formyltransferase of Escherichia coli (strain SMS-3-5 / SECEC).